The following is a 433-amino-acid chain: 5-methylthioadenosine/S-adenosylhomocysteine deaminase (433 aa).

Zn(2+) contacts are provided by H67 and H69. Residues E96, R148, R158, and H186 each coordinate substrate. Zn(2+) is bound at residue H213. Substrate contacts are provided by E216 and D301. Zn(2+) is bound at residue D301.

It belongs to the metallo-dependent hydrolases superfamily. MTA/SAH deaminase family. Zn(2+) serves as cofactor.

It catalyses the reaction S-adenosyl-L-homocysteine + H2O + H(+) = S-inosyl-L-homocysteine + NH4(+). It carries out the reaction S-methyl-5'-thioadenosine + H2O + H(+) = S-methyl-5'-thioinosine + NH4(+). Functionally, catalyzes the deamination of 5-methylthioadenosine and S-adenosyl-L-homocysteine into 5-methylthioinosine and S-inosyl-L-homocysteine, respectively. Is also able to deaminate adenosine. This is 5-methylthioadenosine/S-adenosylhomocysteine deaminase from Pelotomaculum thermopropionicum (strain DSM 13744 / JCM 10971 / SI).